Here is a 349-residue protein sequence, read N- to C-terminus: tRNA pseudouridine synthase D (349 aa).

F27 is a binding site for substrate. Catalysis depends on D80, which acts as the Nucleophile. Residue N129 participates in substrate binding. A TRUD domain is found at 155–303 (GVPNYFGAQR…VEAARRAMLL (149 aa)). F329 is a substrate binding site.

The protein belongs to the pseudouridine synthase TruD family.

It catalyses the reaction uridine(13) in tRNA = pseudouridine(13) in tRNA. Functionally, responsible for synthesis of pseudouridine from uracil-13 in transfer RNAs. The sequence is that of tRNA pseudouridine synthase D from Escherichia coli O127:H6 (strain E2348/69 / EPEC).